A 373-amino-acid chain; its full sequence is Probable quinol oxidase subunit 2 (373 aa).

The N-terminal stretch at 1 to 19 (MSKFKSLLLLFGSLILLSG) is a signal peptide. Residue Cys20 is the site of N-palmitoyl cysteine attachment. Cys20 carries S-diacylglycerol cysteine lipidation. 2 consecutive transmembrane segments (helical) span residues 38–58 (FLIM…LILF) and 82–102 (LETI…IPTV). Basic and acidic residues-rich tracts occupy residues 292-320 (EERT…ERHG) and 339-373 (EESH…GGGH). The tract at residues 292-373 (EERTADVLDK…KKDHENGGGH (82 aa)) is disordered.

This sequence belongs to the cytochrome c oxidase subunit 2 family.

It is found in the cell membrane. It carries out the reaction 2 a quinol + O2 = 2 a quinone + 2 H2O. Catalyzes quinol oxidation with the concomitant reduction of oxygen to water. Subunit II transfers the electrons from a quinol to the binuclear center of the catalytic subunit I. The protein is Probable quinol oxidase subunit 2 (qoxA) of Staphylococcus saprophyticus subsp. saprophyticus (strain ATCC 15305 / DSM 20229 / NCIMB 8711 / NCTC 7292 / S-41).